Here is a 311-residue protein sequence, read N- to C-terminus: uncharacterized protein (311 aa).

This is an uncharacterized protein from Sinorhizobium fredii (strain NBRC 101917 / NGR234).